The sequence spans 148 residues: Transcriptional regulator MraZ (148 aa).

SpoVT-AbrB domains are found at residues 5–53 (ETAI…AEKE) and 82–125 (SAVL…SEQA).

It belongs to the MraZ family. As to quaternary structure, forms oligomers.

The protein localises to the cytoplasm. It is found in the nucleoid. This is Transcriptional regulator MraZ from Xanthomonas axonopodis pv. citri (strain 306).